The primary structure comprises 705 residues: Bifunctional arginine dihydrolase/ornithine cyclodeaminase ArgZ (705 aa).

The tract at residues 10–269 (CPPDHYDVDY…GAAKCLTLRV (260 aa)) is arginine dihydrolase. L-arginine contacts are provided by asparagine 22, asparagine 71, arginine 90, arginine 139, histidine 168, aspartate 170, alanine 258, and cysteine 264. Positions 22, 71, 90, 139, and 168 each coordinate L-ornithine. The Proton donor/acceptor role is filled by histidine 168. 2 residues coordinate L-ornithine: alanine 258 and cysteine 264. The active-site Nucleophile is the cysteine 264. Residues 285-695 (SRVIRMEGHL…SLLVRQLQQL (411 aa)) form an ornithine cyclodeaminase region. NAD(+) is bound by residues asparagine 525, alanine 526, aspartate 604, serine 636, methionine 637, leucine 638, histidine 639, aspartate 657, aspartate 680, and valine 681.

The protein in the N-terminal section; belongs to the DDAH family. In the C-terminal section; belongs to the AgrE/ArgZ ornithine cyclodeaminase family. As to quaternary structure, homotetramer. The cofactor is NAD(+).

The enzyme catalyses L-arginine + 2 H2O + 2 H(+) = L-ornithine + 2 NH4(+) + CO2. The catalysed reaction is L-ornithine = L-proline + NH4(+). Its activity is regulated as follows. Arginine dihydrolase activity does not require a metal cofactor. In terms of biological role, bifunctional enzyme involved in a cyanobacterial arginine utilization pathway that enables cellular adaptation to nitrogen fluctuations. Catalyzes the hydrolysis of arginine to ornithine, with the release of ammonia and carbon dioxide. Then, probably catalyzes the conversion of ornithine to proline, with the release of ammonia. Is highly specific for arginine and cannot hydrolyze citrulline, dimethylarginine and other amino acids. The chain is Bifunctional arginine dihydrolase/ornithine cyclodeaminase ArgZ from Synechocystis sp. (strain ATCC 27184 / PCC 6803 / Kazusa).